The following is a 349-amino-acid chain: Methylglutaconyl-CoA hydratase 1, mitochondrial (349 aa).

A mitochondrion-targeting transit peptide spans 1–37 (MPPVSRILSYAPRVAIRPSSQLARPARAFAVGTVRYY).

The protein belongs to the enoyl-CoA hydratase/isomerase family. Homohexamer.

It localises to the mitochondrion. It carries out the reaction (3S)-3-hydroxy-3-methylglutaryl-CoA = 3-methyl-(2E)-glutaconyl-CoA + H2O. The protein operates within amino-acid degradation; L-leucine degradation; (S)-3-hydroxy-3-methylglutaryl-CoA from 3-isovaleryl-CoA: step 3/3. In terms of biological role, 3-methylglutaconyl-CoA hydratase that catalyzes the fifth step in the leucine degradation pathway, the reversible hydration of 3-methylglutaconyl-CoA (3-MG-CoA) to 3-hydroxy-3-methylglutaryl-CoA (HMG-CoA). Involved in vegetative growth, conidiation and in the stress response. Controls mitochondrial morphology and mitophagy, which are critical for the infectious growth of the pathogen. The protein is Methylglutaconyl-CoA hydratase 1, mitochondrial of Pyricularia oryzae (strain 70-15 / ATCC MYA-4617 / FGSC 8958) (Rice blast fungus).